Here is a 79-residue protein sequence, read N- to C-terminus: uncharacterized protein (79 aa).

The N-terminal stretch at 1-33 is a signal peptide; the sequence is MRFIIRTVMLIALVWIGLLLSGYGVLIGSKENA.

This is an uncharacterized protein from Escherichia coli O157:H7.